A 197-amino-acid chain; its full sequence is Imidazoleglycerol-phosphate dehydratase (197 aa).

The protein belongs to the imidazoleglycerol-phosphate dehydratase family.

The protein localises to the cytoplasm. The catalysed reaction is D-erythro-1-(imidazol-4-yl)glycerol 3-phosphate = 3-(imidazol-4-yl)-2-oxopropyl phosphate + H2O. The protein operates within amino-acid biosynthesis; L-histidine biosynthesis; L-histidine from 5-phospho-alpha-D-ribose 1-diphosphate: step 6/9. This is Imidazoleglycerol-phosphate dehydratase from Erythrobacter litoralis (strain HTCC2594).